Here is a 375-residue protein sequence, read N- to C-terminus: Chlorophyll a/b light-harvesting protein PcbC (375 aa).

The next 6 helical transmembrane spans lie at 40–60, 102–122, 151–171, 225–245, 262–282, and 300–320; these read LLGA…SITV, YFVI…GGLF, LSLI…AFVA, IIGG…WHIL, AILS…GFFV, and GAAA…VWHA. The interval 352 to 375 is disordered; it reads ARTFIGRGKPQPEPPKKKGLFGRG.

This sequence belongs to the PsbB/PsbC family. IsiA/Pcb subfamily. In terms of assembly, the antenna complex consists of chlorophylls (a and b) and chlorophyll a/b binding proteins. The cofactor is chlorophyll a. It depends on chlorophyll b as a cofactor.

Its subcellular location is the cellular thylakoid membrane. Functionally, the antenna complex functions as a light receptor, it captures and delivers excitation energy to photosystems II and I. The Prochlorales pcb genes are not related to higher plant LHCs. This is Chlorophyll a/b light-harvesting protein PcbC (pcbC) from Prochlorothrix hollandica.